The primary structure comprises 818 residues: Protocadherin beta-1 (818 aa).

A signal peptide spans Met1–Ala28. At Thr29–Leu691 the chain is on the extracellular side. 5 Cadherin domains span residues Val35–Phe133, Pro138–Phe242, Ser243–Val347, Met348–Phe452, and Tyr457–Ile562. 4 N-linked (GlcNAc...) asparagine glycosylation sites follow: Asn169, Asn209, Asn257, and Asn419. N-linked (GlcNAc...) asparagine glycosylation occurs at Asn568. The region spanning Val577–Leu672 is the Cadherin 6 domain. The helical transmembrane segment at Val692–Ile712 threads the bilayer. The Cytoplasmic portion of the chain corresponds to His713–Met818. The segment at Met789–Met818 is disordered. Residues Asp800–Met818 show a composition bias toward basic and acidic residues.

The protein localises to the cell membrane. Functionally, potential calcium-dependent cell-adhesion protein. May be involved in the establishment and maintenance of specific neuronal connections in the brain. The sequence is that of Protocadherin beta-1 (PCDHB1) from Homo sapiens (Human).